The following is a 277-amino-acid chain: Hemin import ATP-binding protein HmuV (277 aa).

Residues 25 to 260 form the ABC transporter domain; that stretch reads IHAQGLNLIL…DIIERVYGWP (236 aa). An ATP-binding site is contributed by 57–64; that stretch reads GPNGAGKS.

The protein belongs to the ABC transporter superfamily. Heme (hemin) importer (TC 3.A.1.14.5) family. The complex is composed of two ATP-binding proteins (HmuV), two transmembrane proteins (HmuU) and a solute-binding protein (HmuT).

The protein resides in the cell inner membrane. Its function is as follows. Part of the ABC transporter complex HmuTUV involved in hemin import. Responsible for energy coupling to the transport system. This is Hemin import ATP-binding protein HmuV from Photobacterium profundum (strain SS9).